The primary structure comprises 188 residues: UPF0398 protein SE_1135 (188 aa).

The protein belongs to the UPF0398 family.

The sequence is that of UPF0398 protein SE_1135 from Staphylococcus epidermidis (strain ATCC 12228 / FDA PCI 1200).